Consider the following 197-residue polypeptide: Ribonuclease HII (197 aa).

In terms of domain architecture, RNase H type-2 spans 9-197; sequence KLIAGVDEVG…APVKKALEQF (189 aa). A divalent metal cation is bound by residues aspartate 15, glutamate 16, and aspartate 107.

It belongs to the RNase HII family. Mn(2+) is required as a cofactor. Mg(2+) serves as cofactor.

Its subcellular location is the cytoplasm. It carries out the reaction Endonucleolytic cleavage to 5'-phosphomonoester.. Its function is as follows. Endonuclease that specifically degrades the RNA of RNA-DNA hybrids. This chain is Ribonuclease HII, found in Haemophilus influenzae (strain PittEE).